The chain runs to 380 residues: Tubby-like F-box protein 9 (380 aa).

The F-box domain maps to 30-76; the sequence is PFSWSELPEELLREILIRVETVDGGDWPSRRNVVACAGVCRSWRILT. The segment at 258–283 is disordered; the sequence is SSRSSPVFRSHSKPLRSNSASCSDSG. Over residues 272–283 the composition is skewed to polar residues; it reads LRSNSASCSDSG.

Belongs to the TUB family. Part of a SCF (SKP1-cullin-F-box) protein ligase complex. Interacts with SKP1A/ASK1 and XERICO. Ubiquitous.

Its pathway is protein modification; protein ubiquitination. Component of SCF(ASK-cullin-F-box) E3 ubiquitin ligase complexes, which may mediate the ubiquitination and subsequent proteasomal degradation of target proteins. Confers sensitivity to ABA during seed germination and early seedling development. This Arabidopsis thaliana (Mouse-ear cress) protein is Tubby-like F-box protein 9.